A 366-amino-acid polypeptide reads, in one-letter code: Acetylserotonin O-methyltransferase 2 (366 aa).

S-adenosyl-L-homocysteine is bound by residues Gly209, Asp232, Asp253, and Lys267. His271 (proton acceptor) is an active-site residue. Catalysis depends on residues Glu302 and Glu332.

The protein belongs to the class I-like SAM-binding methyltransferase superfamily. Cation-independent O-methyltransferase family. Homodimer. Expressed in roots, leaves, stems and flowers.

It localises to the cytoplasm. The enzyme catalyses N-acetylserotonin + S-adenosyl-L-methionine = melatonin + S-adenosyl-L-homocysteine + H(+). It functions in the pathway aromatic compound metabolism; melatonin biosynthesis; melatonin from serotonin: step 1/2. Its function is as follows. Methyltransferase which catalyzes the transfer of a methyl group onto N-acetylserotonin, producing melatonin (N-acetyl-5-methoxytryptamine). In Oryza sativa subsp. japonica (Rice), this protein is Acetylserotonin O-methyltransferase 2.